Consider the following 359-residue polypeptide: MISPGSPPSIVALGGGHGLYVTLSAARRLTPYVTAIVTVADDGGSSGRLRSELGVVPPGDLRMALAALASDSPYGRLWATILQHRFGGSGALAGHPIGNLMLAGLSEVLADPVAALDEVGRILGVKGRVLPMCPIALQIEADVSGLEADPRIFRLIRGQVAIASTPGKVRRVRLLPVDPPATRQAVDAIMAANLVVLGPGSWFTSVIPHVLVPGLVTALRATTARRALVLNLAAGPGETAGFSVERHLHVLAQHAPGFTVHDIIIDADRVPNNREREQLRRAATLLQAEVHFVDVARPGTSLHDPGKLATALDGVRVGNQDSSAPTVAATEQIRLDGKRPQTGVNGPVGKGPRGDDAWR.

A disordered region spans residues 317-359 (VGNQDSSAPTVAATEQIRLDGKRPQTGVNGPVGKGPRGDDAWR).

This sequence belongs to the gluconeogenesis factor family.

It is found in the cytoplasm. Required for morphogenesis under gluconeogenic growth conditions. This is Putative gluconeogenesis factor from Mycobacterium leprae (strain TN).